The following is a 203-amino-acid chain: Dephospho-CoA kinase (203 aa).

A DPCK domain is found at 3-202 (KIGLTGSIGM…MRIAKGDFRN (200 aa)). 11–16 (GMGKST) provides a ligand contact to ATP.

This sequence belongs to the CoaE family.

It localises to the cytoplasm. The enzyme catalyses 3'-dephospho-CoA + ATP = ADP + CoA + H(+). It participates in cofactor biosynthesis; coenzyme A biosynthesis; CoA from (R)-pantothenate: step 5/5. Functionally, catalyzes the phosphorylation of the 3'-hydroxyl group of dephosphocoenzyme A to form coenzyme A. This is Dephospho-CoA kinase from Rhizobium etli (strain ATCC 51251 / DSM 11541 / JCM 21823 / NBRC 15573 / CFN 42).